The chain runs to 177 residues: Inorganic pyrophosphatase (177 aa).

Substrate-binding residues include Lys-29, Arg-43, and Tyr-55. Mg(2+)-binding residues include Asp-65, Asp-70, and Asp-102. Tyr-141 lines the substrate pocket.

This sequence belongs to the PPase family. As to quaternary structure, homohexamer. Mg(2+) is required as a cofactor.

The protein localises to the cytoplasm. The enzyme catalyses diphosphate + H2O = 2 phosphate + H(+). In terms of biological role, catalyzes the hydrolysis of inorganic pyrophosphate (PPi) forming two phosphate ions. This Aquifex pyrophilus protein is Inorganic pyrophosphatase.